The following is a 332-amino-acid chain: Junctional sarcoplasmic reticulum protein 1 (332 aa).

Residues 1-80 (MTTRGLEDLD…EKELAGKEST (80 aa)) form a mediates interaction with CACNA1S region. Disordered regions lie at residues 1–125 (MTTR…PWGD) and 159–332 (APHP…KGRD). Threonine 51 bears the Phosphothreonine mark. Over residues 66–76 (GLKKMEKELAG) the composition is skewed to basic and acidic residues. Composition is skewed to pro residues over residues 98 to 116 (QAPP…PPRT) and 177 to 197 (APKP…PGPP). Low complexity predominate over residues 221 to 232 (GGSISEASGEES). A phosphoserine mark is found at serine 223 and serine 228. 2 stretches are compositionally biased toward basic and acidic residues: residues 239 to 256 (GSQE…EKLK) and 283 to 307 (RRWE…EHGK).

In terms of assembly, interacts with CACNA1S, CACNB1 and calsequestrin. Specifically expressed in skeletal muscle. Detected in skeletal muscle and tongue (at protein level).

The protein localises to the sarcoplasmic reticulum membrane. It is found in the endoplasmic reticulum membrane. In terms of biological role, involved in skeletal muscle excitation/contraction coupling (EC), probably acting as a regulator of the voltage-sensitive calcium channel CACNA1S. EC is a physiological process whereby an electrical signal (depolarization of the plasma membrane) is converted into a chemical signal, a calcium gradient, by the opening of ryanodine receptor calcium release channels. May regulate CACNA1S membrane targeting and activity. The chain is Junctional sarcoplasmic reticulum protein 1 (Jsrp1) from Mus musculus (Mouse).